The primary structure comprises 234 residues: 1-(5-phosphoribosyl)-5-[(5-phosphoribosylamino)methylideneamino] imidazole-4-carboxamide isomerase (234 aa).

Asp-9 (proton acceptor) is an active-site residue. Residue Asp-131 is the Proton donor of the active site.

It belongs to the HisA/HisF family.

It is found in the cytoplasm. It catalyses the reaction 1-(5-phospho-beta-D-ribosyl)-5-[(5-phospho-beta-D-ribosylamino)methylideneamino]imidazole-4-carboxamide = 5-[(5-phospho-1-deoxy-D-ribulos-1-ylimino)methylamino]-1-(5-phospho-beta-D-ribosyl)imidazole-4-carboxamide. Its pathway is amino-acid biosynthesis; L-histidine biosynthesis; L-histidine from 5-phospho-alpha-D-ribose 1-diphosphate: step 4/9. This Staphylococcus aureus (strain JH1) protein is 1-(5-phosphoribosyl)-5-[(5-phosphoribosylamino)methylideneamino] imidazole-4-carboxamide isomerase.